The sequence spans 408 residues: Argininosuccinate synthase (408 aa).

ATP is bound by residues 11–19 (AYSGGLDTS) and Ala-38. Residues Tyr-91 and Ser-96 each contribute to the L-citrulline site. ATP is bound at residue Gly-121. Thr-123, Asn-127, and Asp-128 together coordinate L-aspartate. Residue Asn-127 coordinates L-citrulline. The L-citrulline site is built by Arg-131, Ser-182, Ser-191, Glu-267, and Tyr-279.

It belongs to the argininosuccinate synthase family. Type 1 subfamily. In terms of assembly, homotetramer.

The protein resides in the cytoplasm. It catalyses the reaction L-citrulline + L-aspartate + ATP = 2-(N(omega)-L-arginino)succinate + AMP + diphosphate + H(+). The protein operates within amino-acid biosynthesis; L-arginine biosynthesis; L-arginine from L-ornithine and carbamoyl phosphate: step 2/3. This is Argininosuccinate synthase from Paracoccus denitrificans (strain Pd 1222).